A 594-amino-acid chain; its full sequence is MADLLSSLKNLSHSSGVYQYFDKNHQLLYIGKAKNLKKRIKSYFSVRNNEITPNYRTSLRIQMMVKQIAFLETILVENEQDALILENSLIKQLKPKYNILLRDDKTYPYIYMDFSTDFPIPLITRKILKQPGVKYFGPFTSGAKDILDSLYELLPLVQKKNCIKDKKACMFYQIERCKAPCENKITKEEYLKIAKECLEMIENKDKLIKELELKMERLSNNLRFEEALIYRDRIAKIQKIAPFTCMDLAKLYDLDIFAFYGKGNKAVLVKMFMRGGKIISSAFEKIHSLNGFDTDEAMKQAIINHYQSHLPLMPEQILLNACSNETLKELQEFISHQYSKKIALSIPKKGDKLALIEIAMKNAQEIFSQEKTSNEDLILEEARSLFKLECMPYRVEIFDTSHHANSQCVGGMVVYENHEFQKNSYRRYHLKGSNEYTQMSELLTRRALDFAKEPPPNLWVIDGGRVQLNIALEILKSSGSFVEVIAISKEKRDSKAYRSKGGAKDIIHTASDTFKLLPSDKRLQWVQKLRDESHRYAINFHRSTKLKNMKQIALLKEKGIGEASVKKLLDYFGSFEAIEKASEQEKNAVLKKRI.

Positions 13 to 99 (HSSGVYQYFD…IKQLKPKYNI (87 aa)) constitute a GIY-YIG domain. The region spanning 205-240 (DKLIKELELKMERLSNNLRFEEALIYRDRIAKIQKI) is the UVR domain.

The protein belongs to the UvrC family. Interacts with UvrB in an incision complex.

It localises to the cytoplasm. Functionally, the UvrABC repair system catalyzes the recognition and processing of DNA lesions. UvrC both incises the 5' and 3' sides of the lesion. The N-terminal half is responsible for the 3' incision and the C-terminal half is responsible for the 5' incision. This Helicobacter pylori (strain Shi470) protein is UvrABC system protein C.